We begin with the raw amino-acid sequence, 371 residues long: MQFKPAVTALVSAVALATLLSGCKKEEAAPAAQAPQVGVVTIQPQAFTLTSELPGRTSAYRVAEVRPQVNGIILKRLFKEGSEVKEGQQLYQIDPAVYEATLANAKANLLATRSLAERYKQLIDEQAVSKQEYDDANAKRLQAEASLKSAQIDLRYTKVLAPISGRIGRSSFTEGALVSNGQTDAMATIQQLDPIYVDVTQSTAELLKLRRDLESGQLQKAGNNAASVQLVLEDGSLFKQEGRLEFSEVAVDETTGSVTLRALFPNPDHTLLPGMFVHARLKAGVNANAILAPQQGVTRDLKGAPTALVVNQENKVELRQLKASRTLGSDWLIEEGLNPGDRLITEGLQYVSPRRRGEGQRCHQRQEAGRP.

A signal peptide spans 1 to 22 (MQFKPAVTALVSAVALATLLSG). Cys-23 is lipidated: N-palmitoyl cysteine. Cys-23 is lipidated: S-diacylglycerol cysteine. The stretch at 115–155 (LAERYKQLIDEQAVSKQEYDDANAKRLQAEASLKSAQIDLR) forms a coiled coil.

This sequence belongs to the membrane fusion protein (MFP) (TC 8.A.1) family.

Its subcellular location is the cell inner membrane. In terms of biological role, the periplasmic linker protein component of an antibiotic efflux pump. Confers resistance to numerous structurally unrelated antibiotics such as carbenicillin, chloramphenicol, erythromycin, novobiocin, streptomycin and tetracycline. Is not involved in organic solvent efflux. The chain is Antibiotic efflux pump periplasmic linker protein ArpA (arpA) from Pseudomonas putida (Arthrobacter siderocapsulatus).